A 304-amino-acid polypeptide reads, in one-letter code: Acetylglutamate kinase (304 aa).

Substrate-binding positions include 77-78 (GG), Arg99, and Asn193.

This sequence belongs to the acetylglutamate kinase family. ArgB subfamily.

The protein localises to the cytoplasm. It carries out the reaction N-acetyl-L-glutamate + ATP = N-acetyl-L-glutamyl 5-phosphate + ADP. Its pathway is amino-acid biosynthesis; L-arginine biosynthesis; N(2)-acetyl-L-ornithine from L-glutamate: step 2/4. Catalyzes the ATP-dependent phosphorylation of N-acetyl-L-glutamate. The polypeptide is Acetylglutamate kinase (Chlorobium limicola (strain DSM 245 / NBRC 103803 / 6330)).